The sequence spans 789 residues: Zinc finger FYVE domain-containing protein 1 (789 aa).

The required for localization in the lipid droplets stretch occupies residues 416–788 (MAHSSFFPDE…LSVMTGKGPL (373 aa)). 2 FYVE-type zinc fingers span residues 598-659 (NSQI…EARN) and 715-775 (DHEI…KKPA). Zn(2+) is bound by residues Cys604, Cys607, Cys620, Cys623, Cys628, Cys631, Cys651, Cys654, Cys721, Cys724, Cys737, Cys740, Cys745, Cys748, Cys767, and Cys770.

In terms of assembly, interacts with RAB18 (in GTP-bound form). Interacts with BSCL2 in a RAB18-dependent manner. Interacts with ZW10.

Its subcellular location is the golgi apparatus. It is found in the golgi stack. The protein localises to the endoplasmic reticulum. The protein resides in the preautophagosomal structure. It localises to the lipid droplet. Its subcellular location is the mitochondrion. Functionally, plays a role in the formation of lipid droplets (LDs) which are storage organelles at the center of lipid and energy homeostasis. Regulates the morphology, size and distribution of LDs. Mediates the formation of endoplasmic reticulum-lipid droplets (ER-LD) contact sites by forming a complex with RAB18 and ZW10. Binds to phosphatidylinositol 3-phosphate (PtdIns3P) through FYVE-type zinc finger. The protein is Zinc finger FYVE domain-containing protein 1 (ZFYVE1) of Pongo abelii (Sumatran orangutan).